Here is a 107-residue protein sequence, read N- to C-terminus: Nucleoid-associated protein NE0434 (107 aa).

It belongs to the YbaB/EbfC family. Homodimer.

It is found in the cytoplasm. The protein localises to the nucleoid. In terms of biological role, binds to DNA and alters its conformation. May be involved in regulation of gene expression, nucleoid organization and DNA protection. The chain is Nucleoid-associated protein NE0434 from Nitrosomonas europaea (strain ATCC 19718 / CIP 103999 / KCTC 2705 / NBRC 14298).